The following is a 329-amino-acid chain: Fructose-1,6-bisphosphatase class 1 2 (329 aa).

4 residues coordinate Mg(2+): Glu92, Asp111, Leu113, and Asp114. Residues 114 to 117 (DGSS) and Asn206 contribute to the substrate site. Glu278 provides a ligand contact to Mg(2+).

The protein belongs to the FBPase class 1 family. Homotetramer. Requires Mg(2+) as cofactor.

The protein resides in the cytoplasm. It catalyses the reaction beta-D-fructose 1,6-bisphosphate + H2O = beta-D-fructose 6-phosphate + phosphate. Its pathway is carbohydrate biosynthesis; gluconeogenesis. This chain is Fructose-1,6-bisphosphatase class 1 2, found in Xanthobacter autotrophicus (strain ATCC BAA-1158 / Py2).